The following is a 521-amino-acid chain: Cytochrome P450 1A1 (521 aa).

Residue F229 participates in substrate binding. C463 serves as a coordination point for heme.

It belongs to the cytochrome P450 family. Heme serves as cofactor.

It localises to the endoplasmic reticulum membrane. The protein localises to the microsome membrane. The catalysed reaction is an organic molecule + reduced [NADPH--hemoprotein reductase] + O2 = an alcohol + oxidized [NADPH--hemoprotein reductase] + H2O + H(+). In terms of biological role, cytochromes P450 are a group of heme-thiolate monooxygenases. They oxidize a variety of structurally unrelated compounds, including steroids, fatty acids, and xenobiotics. In Pleuronectes platessa (European plaice), this protein is Cytochrome P450 1A1 (cyp1a1).